The following is a 156-amino-acid chain: Ribosomal RNA large subunit methyltransferase H (156 aa).

Residues leucine 73, glycine 104, and 123-128 contribute to the S-adenosyl-L-methionine site; that span reads LSALTL.

The protein belongs to the RNA methyltransferase RlmH family. As to quaternary structure, homodimer.

It is found in the cytoplasm. The catalysed reaction is pseudouridine(1915) in 23S rRNA + S-adenosyl-L-methionine = N(3)-methylpseudouridine(1915) in 23S rRNA + S-adenosyl-L-homocysteine + H(+). In terms of biological role, specifically methylates the pseudouridine at position 1915 (m3Psi1915) in 23S rRNA. The sequence is that of Ribosomal RNA large subunit methyltransferase H from Shewanella oneidensis (strain ATCC 700550 / JCM 31522 / CIP 106686 / LMG 19005 / NCIMB 14063 / MR-1).